Here is a 267-residue protein sequence, read N- to C-terminus: Orotidine 5'-phosphate decarboxylase (267 aa).

Substrate-binding positions include Asp-37, 59 to 61 (KTH), 91 to 100 (DRKFADIGNT), Tyr-217, and Arg-235. Lys-93 serves as the catalytic Proton donor.

It belongs to the OMP decarboxylase family.

It catalyses the reaction orotidine 5'-phosphate + H(+) = UMP + CO2. The protein operates within pyrimidine metabolism; UMP biosynthesis via de novo pathway; UMP from orotate: step 2/2. This chain is Orotidine 5'-phosphate decarboxylase (URA3), found in Eremothecium gossypii (strain ATCC 10895 / CBS 109.51 / FGSC 9923 / NRRL Y-1056) (Yeast).